Here is a 247-residue protein sequence, read N- to C-terminus: MAAAIASGLIRQKRQAREQHWDRPSASRRRSSPSKNRGLFNGNLVDIFSKVRIFGLKKRRLRRQDPQLKGIVTRLYCRQGYYLQMHPDGALDGTKDDSTNSTLFNLIPVGLRVVAIQGVKTGLYIAMNGEGYLYPSELFTPECKFKESVFENYYVIYSSMLYRQQESGRAWFLGLNKEGQVMKGNRVKKTKPAAHFLPKPLEVAMYREPSLHDVGETVPKAGVTPSKSTSASAIMNGGKPVNKCKTT.

Disordered stretches follow at residues 1-37 (MAAA…SKNR) and 216-247 (ETVP…CKTT). Positions 15 to 25 (QAREQHWDRPS) are enriched in basic and acidic residues.

Belongs to the heparin-binding growth factors family. As to quaternary structure, interacts with SCN8A. As to expression, brain and testis; widely distributed in the developing nervous system. In adult, high levels in the granular layer of the cerebellum, less in hippocampus and olfactory bulb.

The protein resides in the nucleus. Functionally, probably involved in nervous system development and function. The sequence is that of Fibroblast growth factor 14 (Fgf14) from Mus musculus (Mouse).